The chain runs to 187 residues: Elongation factor P (187 aa).

Belongs to the elongation factor P family.

It is found in the cytoplasm. It participates in protein biosynthesis; polypeptide chain elongation. Its function is as follows. Involved in peptide bond synthesis. Stimulates efficient translation and peptide-bond synthesis on native or reconstituted 70S ribosomes in vitro. Probably functions indirectly by altering the affinity of the ribosome for aminoacyl-tRNA, thus increasing their reactivity as acceptors for peptidyl transferase. The polypeptide is Elongation factor P (Parvibaculum lavamentivorans (strain DS-1 / DSM 13023 / NCIMB 13966)).